The sequence spans 187 residues: Inosine triphosphate pyrophosphatase (187 aa).

11–16 (TSNKNK) serves as a coordination point for ITP. Glutamate 39 contacts Mg(2+). Residues lysine 51, 67 to 68 (DT), lysine 84, 143 to 146 (FGWD), lysine 164, and 169 to 170 (HR) contribute to the ITP site.

This sequence belongs to the HAM1 NTPase family. In terms of assembly, homodimer. Mg(2+) serves as cofactor. Mn(2+) is required as a cofactor.

The protein resides in the cytoplasm. Its subcellular location is the nucleus. The catalysed reaction is ITP + H2O = IMP + diphosphate + H(+). The enzyme catalyses dITP + H2O = dIMP + diphosphate + H(+). It carries out the reaction XTP + H2O = XMP + diphosphate + H(+). Its function is as follows. Pyrophosphatase that hydrolyzes non-canonical purine nucleotides such as inosine triphosphate (ITP), deoxyinosine triphosphate (dITP) or xanthosine 5'-triphosphate (XTP) to their respective monophosphate derivatives. The enzyme does not distinguish between the deoxy- and ribose forms. Probably excludes non-canonical purines from RNA and DNA precursor pools, thus preventing their incorporation into RNA and DNA and avoiding chromosomal lesions. The protein is Inosine triphosphate pyrophosphatase of Aspergillus fumigatus (strain ATCC MYA-4609 / CBS 101355 / FGSC A1100 / Af293) (Neosartorya fumigata).